The following is a 354-amino-acid chain: Trans-L-3-hydroxyproline dehydratase (354 aa).

Cys-104 acts as the Proton acceptor in catalysis. Substrate-binding positions include Gly-105–His-106, Asp-269, and Gly-274–Ser-275.

Belongs to the proline racemase family. In terms of assembly, homodimer.

The enzyme catalyses trans-3-hydroxy-L-proline = 1-pyrroline-2-carboxylate + H2O. Functionally, catalyzes the dehydration of trans-3-hydroxy-L-proline to delta-1-pyrroline-2-carboxylate (Pyr2C). The sequence is that of Trans-L-3-hydroxyproline dehydratase (L3HYPDH) from Pongo abelii (Sumatran orangutan).